Here is a 430-residue protein sequence, read N- to C-terminus: UDP-N-acetylmuramoylalanine--D-glutamate ligase (430 aa).

Position 105–111 (105–111) interacts with ATP; that stretch reads GSNGKTT.

This sequence belongs to the MurCDEF family.

The protein resides in the cytoplasm. It catalyses the reaction UDP-N-acetyl-alpha-D-muramoyl-L-alanine + D-glutamate + ATP = UDP-N-acetyl-alpha-D-muramoyl-L-alanyl-D-glutamate + ADP + phosphate + H(+). It participates in cell wall biogenesis; peptidoglycan biosynthesis. Functionally, cell wall formation. Catalyzes the addition of glutamate to the nucleotide precursor UDP-N-acetylmuramoyl-L-alanine (UMA). This is UDP-N-acetylmuramoylalanine--D-glutamate ligase from Pseudothermotoga lettingae (strain ATCC BAA-301 / DSM 14385 / NBRC 107922 / TMO) (Thermotoga lettingae).